Reading from the N-terminus, the 868-residue chain is MRELVNIPLLQMLTLVAFSGTEKLPKAPVITTPLETVDALVEEVATFMCAVESYPQPEISWTRNKILIKLFDTRYSIRENGQLLTILSVEDSDDGIYCCTANNGVGGAVESCGALQVKMKPKITRPPINVKIIEGLKAVLPCTTMGNPKPSVSWIKGDSALRENSRIAVLESGSLRIHNVQKEDAGQYRCVAKNSLGTAYSKLVKLEVEVFARILRAPESHNVTFGSFVTLRCTAIGMPVPTISWIENGNAVSSGSIQENVKDRVIDSRLQLFITKPGLYTCIATNKHGEKFSTAKAAATVSIAEWSKSQKESKGYCAQYRGEVCDAVLVKDSLVFFNTSYPDPEEAQELLIHTAWNELKAVSPLCRPAAEALLCNHLFQECSPGVLPTPMPICREYCLAVKELFCAKEWLAMEGKTHRGLYRSGMHFLPVPECSKLPSMHQDPTACTRLPYLDYKKENITTFPSITSSKPSVDIPNLPASTSSFAVSPAYSMTVIISIMSCFAVFALLTITTLYCCRRRREWKNKKRESAAVTLTTLPSELLLDRLHPNPMYQRMPLLLNPKLLSLEYPRNNIEYVRDIGEGAFGRVFQARAPGLLPYEPFTMVAVKMLKEEASADMQADFQREAALMAEFDNPNIVKLLGVCAVGKPMCLLFEYMAYGDLNEFLRSMSPHTVCSLSHSDLSTRARVSSPGPPPLSCAEQLCIARQVAAGMAYLSERKFVHRDLATRNCLVGENMVVKIADFGLSRNIYSADYYKADGNDAIPIRWMPPESIFYNRYTTESDVWAYGVVLWEIFSYGLQPYYGMAHEEVIYYVRDGNILACPENCPLELYNLMRLCWSKLPADRPSFCSIHRILQRMCERAEGTVGV.

An N-terminal signal peptide occupies residues 1 to 21; the sequence is MRELVNIPLLQMLTLVAFSGT. Residues 22-494 are Extracellular-facing; it reads EKLPKAPVIT…FAVSPAYSMT (473 aa). Ig-like domains follow at residues 28–116, 121–205, and 212–302; these read PVIT…GALQ, PKIT…KLVK, and ARIL…ATVS. Intrachain disulfides connect Cys-49/Cys-99, Cys-98/Cys-112, and Cys-142/Cys-190. N-linked (GlcNAc...) asparagine glycosylation occurs at Asn-222. 6 disulfides stabilise this stretch: Cys-233-Cys-282, Cys-317-Cys-382, Cys-325-Cys-375, Cys-366-Cys-406, Cys-394-Cys-447, and Cys-398-Cys-434. In terms of domain architecture, FZ spans 312–450; the sequence is ESKGYCAQYR…HQDPTACTRL (139 aa). Asn-338 is a glycosylation site (N-linked (GlcNAc...) asparagine). N-linked (GlcNAc...) asparagine glycosylation occurs at Asn-459. Residues 495–515 traverse the membrane as a helical segment; it reads VIISIMSCFAVFALLTITTLY. The Cytoplasmic portion of the chain corresponds to 516 to 868; sequence CCRRRREWKN…CERAEGTVGV (353 aa). Phosphotyrosine; by autocatalysis is present on Tyr-553. Residues 574-855 enclose the Protein kinase domain; sequence IEYVRDIGEG…PSFCSIHRIL (282 aa). ATP-binding positions include 580-588 and Lys-608; that span reads IGEGAFGRV. 2 positions are modified to phosphoserine; by CK2: Ser-680 and Ser-697. The active-site Proton acceptor is the Asp-724. At Tyr-754 the chain carries Phosphotyrosine; by autocatalysis.

The protein belongs to the protein kinase superfamily. Tyr protein kinase family. As to quaternary structure, monomer. Homodimer. Interacts with LRP4; the heterodimer forms an AGRIN receptor complex that binds AGRIN resulting in activation of MUSK. Forms a heterotetramer composed of 2 DOK7 and 2 MUSK molecules which facilitates MUSK trans-autophosphorylation on tyrosine residue and activation. Interacts (via cytoplasmic part) with DOK7 (via IRS-type PTB domain); requires MUSK phosphorylation. Interacts with DVL1 (via DEP domain); the interaction is direct and mediates the formation of a DVL1, MUSK and PAK1 ternary complex involved in AChR clustering. Interacts with PDZRN3; this interaction is enhanced by agrin. Interacts with FNTA; the interaction is direct and mediates AGRIN-induced phosphorylation and activation of FNTA. Interacts with CSNK2B; mediates regulation by CK2. Interacts (via the cytoplasmic domain) with DNAJA3. Interacts with NSF; may regulate MUSK endocytosis and activity. Interacts with CAV3; may regulate MUSK signaling. Interacts with RNF31. Interacts with DOK7. The cofactor is Mg(2+). Ubiquitinated by PDZRN3. Ubiquitination promotes endocytosis and lysosomal degradation. In terms of processing, phosphorylated. Phosphorylation is induced by AGRIN in a LRP4-dependent manner. Autophosphorylated. Autophosphorylation at Tyr-553 is required for interaction with DOK7 which in turn stimulates the phosphorylation and the activation of MUSK. Post-translationally, neddylated. In terms of tissue distribution, muscle specific.

It localises to the postsynaptic cell membrane. It carries out the reaction L-tyrosyl-[protein] + ATP = O-phospho-L-tyrosyl-[protein] + ADP + H(+). Its activity is regulated as follows. Positively regulated by CK2. Its function is as follows. Receptor tyrosine kinase which plays a central role in the formation and the maintenance of the neuromuscular junction (NMJ), the synapse between the motor neuron and the skeletal muscle. Recruitment of AGRIN by LRP4 to the MUSK signaling complex induces phosphorylation and activation of MUSK, the kinase of the complex. The activation of MUSK in myotubes regulates the formation of NMJs through the regulation of different processes including the specific expression of genes in subsynaptic nuclei, the reorganization of the actin cytoskeleton and the clustering of the acetylcholine receptors (AChR) in the postsynaptic membrane. May regulate AChR phosphorylation and clustering through activation of ABL1 and Src family kinases which in turn regulate MUSK. DVL1 and PAK1 that form a ternary complex with MUSK are also important for MUSK-dependent regulation of AChR clustering. May positively regulate Rho family GTPases through FNTA. Mediates the phosphorylation of FNTA which promotes prenylation, recruitment to membranes and activation of RAC1 a regulator of the actin cytoskeleton and of gene expression. Other effectors of the MUSK signaling include DNAJA3 which functions downstream of MUSK. May also play a role within the central nervous system by mediating cholinergic responses, synaptic plasticity and memory formation. The polypeptide is Muscle, skeletal receptor tyrosine protein kinase (Musk) (Rattus norvegicus (Rat)).